Reading from the N-terminus, the 179-residue chain is ATP synthase subunit delta (179 aa).

The protein belongs to the ATPase delta chain family. As to quaternary structure, F-type ATPases have 2 components, F(1) - the catalytic core - and F(0) - the membrane proton channel. F(1) has five subunits: alpha(3), beta(3), gamma(1), delta(1), epsilon(1). F(0) has three main subunits: a(1), b(2) and c(10-14). The alpha and beta chains form an alternating ring which encloses part of the gamma chain. F(1) is attached to F(0) by a central stalk formed by the gamma and epsilon chains, while a peripheral stalk is formed by the delta and b chains.

It localises to the cell inner membrane. Its function is as follows. F(1)F(0) ATP synthase produces ATP from ADP in the presence of a proton or sodium gradient. F-type ATPases consist of two structural domains, F(1) containing the extramembraneous catalytic core and F(0) containing the membrane proton channel, linked together by a central stalk and a peripheral stalk. During catalysis, ATP synthesis in the catalytic domain of F(1) is coupled via a rotary mechanism of the central stalk subunits to proton translocation. Functionally, this protein is part of the stalk that links CF(0) to CF(1). It either transmits conformational changes from CF(0) to CF(1) or is implicated in proton conduction. This is ATP synthase subunit delta from Burkholderia multivorans (strain ATCC 17616 / 249).